The primary structure comprises 122 residues: Small ribosomal subunit protein uS13 (122 aa).

The interval 97–122 (PVRGQRTHTNARTRKGPAKAIAGKKK) is disordered.

Belongs to the universal ribosomal protein uS13 family. In terms of assembly, part of the 30S ribosomal subunit. Forms a loose heterodimer with protein S19. Forms two bridges to the 50S subunit in the 70S ribosome.

Its function is as follows. Located at the top of the head of the 30S subunit, it contacts several helices of the 16S rRNA. In the 70S ribosome it contacts the 23S rRNA (bridge B1a) and protein L5 of the 50S subunit (bridge B1b), connecting the 2 subunits; these bridges are implicated in subunit movement. Contacts the tRNAs in the A and P-sites. The protein is Small ribosomal subunit protein uS13 of Bartonella henselae (strain ATCC 49882 / DSM 28221 / CCUG 30454 / Houston 1) (Rochalimaea henselae).